The sequence spans 211 residues: RING finger protein 222 (211 aa).

Residues 14-65 (CPVCYEKFRDLDGASRTLSCGHVFCHDCLVKYLLSTRVDGQVQRTIVCPICR) form an RING-type zinc finger. The helical transmembrane segment at 187 to 207 (LITLIAVVAVVAAILPWVLLV) threads the bilayer.

It is found in the membrane. The protein is RING finger protein 222 (Rnf222) of Mus musculus (Mouse).